Here is an 877-residue protein sequence, read N- to C-terminus: Leucine--tRNA ligase (877 aa).

The short motif at 43 to 53 (PYPSGRIHMGH) is the 'HIGH' region element. A 'KMSKS' region motif is present at residues 628 to 632 (KMSKS). ATP is bound at residue lysine 631.

Belongs to the class-I aminoacyl-tRNA synthetase family.

It localises to the cytoplasm. The enzyme catalyses tRNA(Leu) + L-leucine + ATP = L-leucyl-tRNA(Leu) + AMP + diphosphate. In Brucella melitensis biotype 2 (strain ATCC 23457), this protein is Leucine--tRNA ligase.